The primary structure comprises 379 residues: UDP-4-amino-4-deoxy-L-arabinose--oxoglutarate aminotransferase (379 aa).

Residue lysine 182 is modified to N6-(pyridoxal phosphate)lysine.

Belongs to the DegT/DnrJ/EryC1 family. ArnB subfamily. Homodimer. Requires pyridoxal 5'-phosphate as cofactor.

It catalyses the reaction UDP-4-amino-4-deoxy-beta-L-arabinose + 2-oxoglutarate = UDP-beta-L-threo-pentopyranos-4-ulose + L-glutamate. The protein operates within nucleotide-sugar biosynthesis; UDP-4-deoxy-4-formamido-beta-L-arabinose biosynthesis; UDP-4-deoxy-4-formamido-beta-L-arabinose from UDP-alpha-D-glucuronate: step 2/3. It functions in the pathway bacterial outer membrane biogenesis; lipopolysaccharide biosynthesis. Catalyzes the conversion of UDP-4-keto-arabinose (UDP-Ara4O) to UDP-4-amino-4-deoxy-L-arabinose (UDP-L-Ara4N). The modified arabinose is attached to lipid A and is required for resistance to polymyxin and cationic antimicrobial peptides. The sequence is that of UDP-4-amino-4-deoxy-L-arabinose--oxoglutarate aminotransferase from Salmonella paratyphi A (strain ATCC 9150 / SARB42).